We begin with the raw amino-acid sequence, 94 residues long: Selenoprotein K (94 aa).

Residues 20-42 traverse the membrane as a helical segment; sequence LSFITDFFWGIAEFVVFFFKTLL. Residues 48–94 form a disordered region; that stretch reads KRRGYGGSSDSRYDDGRGPPGNPPRRMGRISHLRGPSPPPMAGGUGR. Selenocysteine 92 is a non-standard amino acid (selenocysteine).

The protein belongs to the selenoprotein K family. In terms of assembly, interacts with DERL1, DERL2, DERL3 and SELENOS. The SELENOK-SELENOS complex interacts with VCP. Interacts with ZDHHC6. In terms of processing, cleaved by CAPN2/m-calpain in resting macrophages but not in activated macrophages. Macrophage activation up-regulates expression of the calpain inhibitor CAST/calpastatin, resulting in inhibition of CAPN2 activity. Truncated SELENOK proteins produced by failed UGA/Sec decoding are ubiquitinated by the CRL2(KLHDC2) complex, which recognizes the diglycine (Gly-Gly) at the C-terminus of truncated SELENOK proteins.

The protein resides in the endoplasmic reticulum membrane. Its subcellular location is the cell membrane. Required for Ca(2+) flux in immune cells and plays a role in T-cell proliferation and in T-cell and neutrophil migration. Involved in endoplasmic reticulum-associated degradation (ERAD) of soluble glycosylated proteins. Required for palmitoylation and cell surface expression of CD36 and involved in macrophage uptake of low-density lipoprotein and in foam cell formation. Together with ZDHHC6, required for palmitoylation of ITPR1 in immune cells, leading to regulate ITPR1 stability and function. Plays a role in protection of cells from ER stress-induced apoptosis. Protects cells from oxidative stress when overexpressed in cardiomyocytes. This chain is Selenoprotein K, found in Rattus norvegicus (Rat).